The following is a 1306-amino-acid chain: Activating transcription factor 7-interacting protein 1 (1306 aa).

An N-acetylmethionine modification is found at methionine 1. The disordered stretch occupies residues 1–23 (MDSVEEPQKKVFKARKTMRASDR). Lysine 33 is covalently cross-linked (Glycyl lysine isopeptide (Lys-Gly) (interchain with G-Cter in SUMO2)). Phosphoserine occurs at positions 57 and 112. Disordered stretches follow at residues 104 to 470 (EDLN…SMET), 496 to 604 (LPVE…SKRR), 689 to 722 (AAKD…NNMT), 765 to 785 (VVSS…PAAP), 871 to 895 (PLPN…NSST), 920 to 1060 (RTSL…GPSQ), and 1152 to 1196 (AGPQ…STSL). 2 stretches are compositionally biased toward polar residues: residues 109 to 134 (EALS…SPAS) and 143 to 162 (VSDN…SDNP). Phosphothreonine is present on threonine 124. 3 stretches are compositionally biased toward low complexity: residues 185-212 (EEPP…CSEP), 246-261 (EAAS…ASDE), and 284-303 (PSGD…LPRS). A compositionally biased stretch (basic and acidic residues) spans 432 to 441 (QSEKDEHKSP). Phosphoserine occurs at positions 511, 514, 516, and 533. The segment covering 513–523 (GSPSKQESSEN) has biased composition (polar residues). 3 stretches are compositionally biased toward basic and acidic residues: residues 557 to 566 (EGEKSEKDGK), 592 to 601 (KSEDMDSVES), and 689 to 699 (AAKDDLKKRQE). The Nuclear localization signal motif lies at 587–605 (RRKRSKSEDMDSVESKRRR). Residue lysine 592 forms a Glycyl lysine isopeptide (Lys-Gly) (interchain with G-Cter in SUMO2) linkage. Residue serine 593 is modified to Phosphoserine. The tract at residues 596–851 (MDSVESKRRR…NQPSGNVEFI (256 aa)) is interaction with SETDB1. Residues 666-696 (NKRHKAVLTELQAKIARLTKRFGAAKDDLKK) adopt a coiled-coil conformation. Phosphoserine occurs at positions 700 and 707. Polar residues predominate over residues 713 to 722 (NDTNSNNNMT). Over residues 871–884 (PLPNPTKPNIPSVP) the composition is skewed to pro residues. Residue serine 933 is modified to Phosphoserine. Glycyl lysine isopeptide (Lys-Gly) (interchain with G-Cter in SUMO2) cross-links involve residues lysine 944 and lysine 974. The span at 948 to 981 (STFSPPSSAEQNSSATPRIVTENQTNKTVDSSIN) shows a compositional bias: polar residues. Low complexity predominate over residues 987–1000 (STSQSGKASSSDSS). Positions 1001-1011 (GVIDLTMDDEE) are interaction with SUMO. The segment covering 1022–1040 (SPPSSSTVSTSQPMSRPLQ) has biased composition (low complexity). The region spanning 1054-1143 (PTSGPSQATI…RVPQTTTYVV (90 aa)) is the Fibronectin type-III 1 domain. The segment covering 1170-1187 (PRPLHPAPLPEAPQPQRL) has biased composition (pro residues). Residues 1190–1306 (EAASTSLPQK…TDVISSSQNS (117 aa)) form an interaction with MBD1 region. Residues 1196–1302 (LPQKPHLKLA…DPQSTDVISS (107 aa)) form the Fibronectin type-III 2 domain.

It belongs to the MCAF family. As to quaternary structure, interacts with MBD1; the interaction is enhanced when MBD1 is sumoylated. Interacts with SETDB1; the interaction protects SETDB1 from proteasomal degradation and is required to stimulate histone methyltransferase activity and facilitate the conversion of dimethylated to trimethylated H3 'Lys-9'. Interacts with SUMO ubiquitin-like proteins (SUMO1, SUNO2 and SUMO3), with a preference for SUMO2 and SUMO3. Interacts with SP1, ATF7 and ZHX1. Interacts with the general transcription machinery, including ERCC2, ERCC3, GTF2E1, GTF2E2 and POLR2A. As to expression, ubiquitously expressed at all stages studied.

Its subcellular location is the nucleus. Functionally, recruiter that couples transcriptional factors to general transcription apparatus and thereby modulates transcription regulation and chromatin formation. Can both act as an activator or a repressor depending on the context. Required for HUSH-mediated heterochromatin formation and gene silencing. Mediates MBD1-dependent transcriptional repression, probably by recruiting complexes containing SETDB1. Stabilizes SETDB1, is required to stimulate histone methyltransferase activity of SETDB1 and facilitates the conversion of dimethylated to trimethylated H3 'Lys-9' (H3K9me3). The complex formed with MBD1 and SETDB1 represses transcription and couples DNA methylation and histone H3 'Lys-9' trimethylation (H3K9me3). Facilitates telomerase TERT and TERC gene expression by SP1 in cancer cells. This chain is Activating transcription factor 7-interacting protein 1 (Atf7ip), found in Mus musculus (Mouse).